The chain runs to 480 residues: Ochratoxinase (480 aa).

Residues His111, His113, Lys246, His287, and His307 each coordinate Zn(2+). The active site involves Lys246. Asp378 is an active-site residue.

This sequence belongs to the metallo-dependent hydrolases superfamily. Ochratoxinase amidase 2 family. In terms of assembly, homooctamer. The cofactor is Zn(2+).

The protein localises to the secreted. It carries out the reaction ochratoxin A + H2O = ochratoxin alpha + L-phenylalanine. Its activity is regulated as follows. The Zn(2+)-specific chelator 1,10-phenanthroline inhibits the enzyme activity. Functionally, carboxypeptidase that catalyzes the release of a C-terminal amino acid with specific catalytic activity for aromatic amino acids such as phenylalanine. Is able to degrade ochratoxin A, one of the five major mycotoxins most harmful to humans and animals that is produced by Aspergillus and Penicillium species and occurs in a wide range of agricultural products. In Aspergillus niger (strain ATCC 1015 / CBS 113.46 / FGSC A1144 / LSHB Ac4 / NCTC 3858a / NRRL 328 / USDA 3528.7), this protein is Ochratoxinase.